A 281-amino-acid chain; its full sequence is GPN-loop GTPase 3 (281 aa).

13–18 (GSGKST) contributes to the GTP binding site. A Gly-Pro-Asn (GPN)-loop; involved in dimer interface motif is present at residues 70-72 (GPN). 173–176 (SKMD) is a binding site for GTP. Positions 259 to 281 (VQYGEDEEPKEPKDMDEGDFTAQ) are disordered.

Belongs to the GPN-loop GTPase family. Heterodimers with GPN1 or GPN2. Binds to RNA polymerase II (RNAPII).

In terms of biological role, small GTPase required for proper nuclear import of RNA polymerase II and III (RNAPII and RNAPIII). May act at an RNAP assembly step prior to nuclear import. This is GPN-loop GTPase 3 from Mycosarcoma maydis (Corn smut fungus).